Consider the following 311-residue polypeptide: Solute carrier family 25 member 48 (311 aa).

3 Solcar repeats span residues 3–86, 100–205, and 214–301; these read NFQL…TQRF, PHVL…LSDW, and PSPC…SLQA. 6 helical membrane-spanning segments follow: residues 9-29, 61-81, 107-127, 193-213, 217-237, and 277-295; these read FVAG…LDTV, GMSF…GVFS, LLAS…VDLI, CLYF…ACAG, CAVW…ATPM, and ITVN…FLGY.

Belongs to the mitochondrial carrier (TC 2.A.29) family.

The protein resides in the mitochondrion inner membrane. In Bos taurus (Bovine), this protein is Solute carrier family 25 member 48 (SLC25A48).